The primary structure comprises 116 residues: MNLIMSSVAATALISLILAFVAFWLPSLNPDNEKLSPYECGFDPLGSARLPFSLRFFLVAILFLLFDLEIALLLPLPWGNQLLTPSISLLWATSIIILLTLGLIYEWLQGGLEWAE.

3 helical membrane-spanning segments follow: residues 8–28 (VAAT…LPSL), 56–76 (FFLV…LLPL), and 87–107 (ISLL…IYEW).

It belongs to the complex I subunit 3 family.

It is found in the mitochondrion membrane. It carries out the reaction a ubiquinone + NADH + 5 H(+)(in) = a ubiquinol + NAD(+) + 4 H(+)(out). Core subunit of the mitochondrial membrane respiratory chain NADH dehydrogenase (Complex I) that is believed to belong to the minimal assembly required for catalysis. Complex I functions in the transfer of electrons from NADH to the respiratory chain. The immediate electron acceptor for the enzyme is believed to be ubiquinone. The chain is NADH-ubiquinone oxidoreductase chain 3 (MT-ND3) from Squalus acanthias (Spiny dogfish).